Consider the following 483-residue polypeptide: MQKNLIWFRNDLRVYDNTALHQACQNDTDKVISLFISTPKQWHNQSVSKKKISFMYYHLISLQKELLKLNIILYYHESTDFLNSIEYLIFFCKKHKVNNLFYNYEYAINERYRDYLVKKKLSQKGFLVKGFHDNLLFSNRQIRNQKNETYKVFTFFKKKVIQNLHNNIPQCFPVPSKRKSDRDIFLTSISLKNVNLNFNKNFFPVGEKEAINRLKNFCIYKFNDYFLKRDYPFLDATSMLSPYLSAGIISSRYCLKVLLKTKNSLPLNVLLTSPWFDQILWREFYYHLLIGFPKISRSESLVTWEKEIHWINNIKHFNAWKEGNTGFPIIDAGMRQLNELGWMHNRLRMITSSFLVKNLLINWREGEEHFISNLIDGDLALNNGGWQWSASVGCDSVPYIRIFNPLHQSKTFDESGNFIKKFIPELKNVPNHHIHQPHEWSKQKNFKIDYPNPIINYSESRKTSLSLFKQARLKLHKNGLKNS.

One can recognise a Photolyase/cryptochrome alpha/beta domain in the interval 2–136 (QKNLIWFRND…LVKGFHDNLL (135 aa)). 2 residues coordinate (6R)-5,10-methylene-5,6,7,8-tetrahydrofolate: Asn-109 and Glu-110. FAD is bound at residue Tyr-225. Arg-229 contacts DNA. Residue 237-241 (TSMLS) participates in FAD binding. Interaction with DNA stretches follow at residues 278–285 (QILWREFY) and 345–346 (NR). Residue 376-378 (DGD) coordinates FAD. DNA is bound at residue Gln-408.

It belongs to the DNA photolyase class-1 family. Monomer. Requires FAD as cofactor. (6R)-5,10-methylene-5,6,7,8-tetrahydrofolate is required as a cofactor.

It catalyses the reaction cyclobutadipyrimidine (in DNA) = 2 pyrimidine residues (in DNA).. In terms of biological role, involved in repair of UV radiation-induced DNA damage. Catalyzes the light-dependent monomerization (300-600 nm) of cyclobutyl pyrimidine dimers (in cis-syn configuration), which are formed between adjacent bases on the same DNA strand upon exposure to ultraviolet radiation. This is Deoxyribodipyrimidine photo-lyase (phrB) from Buchnera aphidicola subsp. Acyrthosiphon pisum (strain APS) (Acyrthosiphon pisum symbiotic bacterium).